Here is a 1756-residue protein sequence, read N- to C-terminus: Transposon Ty1-PR2 Gag-Pol polyprotein (1756 aa).

Polar residues-rich tracts occupy residues M1–P10, T48–S60, and Q127–F152. Disordered stretches follow at residues M1–Q93, P126–P173, and G352–T421. Positions T153–T165 are enriched in low complexity. Residues N299–H401 are RNA-binding. Positions N402–S418 are enriched in low complexity. The active-site For protease activity; shared with dimeric partner is D461. Positions N583 to C640 are integrase-type zinc finger-like. In terms of domain architecture, Integrase catalytic spans N660–P836. 2 residues coordinate Mg(2+): D671 and D736. Disordered stretches follow at residues S957–K1088, R1093–P1112, and D1131–T1188. The segment covering S961–T970 has biased composition (low complexity). Residues S1006 to T1016 show a composition bias toward polar residues. Residues E1039–S1054 are compositionally biased toward basic and acidic residues. Polar residues-rich tracts occupy residues Y1055–D1083 and P1102–P1112. The Bipartite nuclear localization signal motif lies at K1179–R1213. The 139-residue stretch at N1339 to Q1477 folds into the Reverse transcriptase Ty1/copia-type domain. Residues D1347, D1428, D1429, D1611, E1653, and D1686 each coordinate Mg(2+). One can recognise an RNase H Ty1/copia-type domain in the interval D1611–K1753.

As to quaternary structure, the capsid protein forms a homotrimer, from which the VLPs are assembled. The protease is a homodimer, whose active site consists of two apposed aspartic acid residues. In terms of processing, initially, virus-like particles (VLPs) are composed of the structural unprocessed proteins Gag and Gag-Pol, and also contain the host initiator methionine tRNA (tRNA(i)-Met) which serves as a primer for minus-strand DNA synthesis, and a dimer of genomic Ty RNA. Processing of the polyproteins occurs within the particle and proceeds by an ordered pathway, called maturation. First, the protease (PR) is released by autocatalytic cleavage of the Gag-Pol polyprotein yielding capsid protein p45 and a Pol-p154 precursor protein. This cleavage is a prerequisite for subsequent processing of Pol-p154 at the remaining sites to release the mature structural and catalytic proteins. Maturation takes place prior to the RT reaction and is required to produce transposition-competent VLPs.

It localises to the cytoplasm. The protein resides in the nucleus. The catalysed reaction is DNA(n) + a 2'-deoxyribonucleoside 5'-triphosphate = DNA(n+1) + diphosphate. It carries out the reaction Endonucleolytic cleavage to 5'-phosphomonoester.. Capsid protein (CA) is the structural component of the virus-like particle (VLP), forming the shell that encapsulates the retrotransposons dimeric RNA genome. The particles are assembled from trimer-clustered units and there are holes in the capsid shells that allow for the diffusion of macromolecules. CA also has nucleocapsid-like chaperone activity, promoting primer tRNA(i)-Met annealing to the multipartite primer-binding site (PBS), dimerization of Ty1 RNA and initiation of reverse transcription. In terms of biological role, the aspartyl protease (PR) mediates the proteolytic cleavages of the Gag and Gag-Pol polyproteins after assembly of the VLP. Its function is as follows. Reverse transcriptase/ribonuclease H (RT) is a multifunctional enzyme that catalyzes the conversion of the retro-elements RNA genome into dsDNA within the VLP. The enzyme displays a DNA polymerase activity that can copy either DNA or RNA templates, and a ribonuclease H (RNase H) activity that cleaves the RNA strand of RNA-DNA heteroduplexes during plus-strand synthesis and hydrolyzes RNA primers. The conversion leads to a linear dsDNA copy of the retrotransposon that includes long terminal repeats (LTRs) at both ends. Functionally, integrase (IN) targets the VLP to the nucleus, where a subparticle preintegration complex (PIC) containing at least integrase and the newly synthesized dsDNA copy of the retrotransposon must transit the nuclear membrane. Once in the nucleus, integrase performs the integration of the dsDNA into the host genome. The protein is Transposon Ty1-PR2 Gag-Pol polyprotein (TY1B-PR2) of Saccharomyces cerevisiae (strain ATCC 204508 / S288c) (Baker's yeast).